An 82-amino-acid polypeptide reads, in one-letter code: Cytotoxin 6 (82 aa).

Residues 1-21 (MKTLLLTLVVVTIVCLDLGYT) form the signal peptide. 4 disulfide bridges follow: Cys-24–Cys-42, Cys-35–Cys-59, Cys-63–Cys-74, and Cys-75–Cys-80.

This sequence belongs to the three-finger toxin family. Short-chain subfamily. Type IA cytotoxin sub-subfamily. Monomer in solution; Homodimer and oligomer in the presence of negatively charged lipids forming a pore with a size ranging between 20 and 30 Angstroms. Expressed by the venom gland.

It localises to the secreted. Its subcellular location is the target cell membrane. In terms of biological role, shows cytolytic activity on many different cells by forming pore in lipid membranes. In vivo, increases heart rate or kills the animal by cardiac arrest. In addition, it binds to heparin with high affinity, interacts with Kv channel-interacting protein 1 (KCNIP1) in a calcium-independent manner, and binds to integrin alpha-V/beta-3 (ITGAV/ITGB3) with moderate affinity. This Naja atra (Chinese cobra) protein is Cytotoxin 6.